A 415-amino-acid polypeptide reads, in one-letter code: 26S proteasome regulatory subunit 6B (415 aa).

Residue 203–210 (GPPGCGKT) coordinates ATP.

It belongs to the AAA ATPase family.

Its subcellular location is the cytoplasm. The protein localises to the nucleus. Functionally, the 26S proteasome is involved in the ATP-dependent degradation of ubiquitinated proteins. The regulatory (or ATPase) complex confers ATP dependency and substrate specificity to the 26S complex. This Manduca sexta (Tobacco hawkmoth) protein is 26S proteasome regulatory subunit 6B.